The sequence spans 56 residues: Preprotein translocase subunit SecG (56 aa).

The Cytoplasmic segment spans residues 1 to 30; that stretch reads MARKDKKTLPASGAGIVRYFNDDTAGVKLS. A helical membrane pass occupies residues 31 to 52; the sequence is PKQVVIGTIIVALICIALRFTT. Residues 53 to 56 lie on the Extracellular side of the membrane; that stretch reads SVGY.

The protein belongs to the SEC61-beta family. Component of the protein translocase complex. Heterotrimer consisting of alpha (SecY), beta (SecG) and gamma (SecE) subunits. Can form oligomers of the heterotrimer.

It localises to the cell membrane. In terms of biological role, involved in protein export. The function of the beta subunit is unknown, but it may be involved in stabilization of the trimeric complex. The sequence is that of Preprotein translocase subunit SecG from Methanosphaera stadtmanae (strain ATCC 43021 / DSM 3091 / JCM 11832 / MCB-3).